The chain runs to 384 residues: Acetylornithine aminotransferase (384 aa).

Pyridoxal 5'-phosphate-binding positions include 95 to 96 (GA) and F122. R125 serves as a coordination point for N(2)-acetyl-L-ornithine. Pyridoxal 5'-phosphate is bound at residue 207–210 (DEIQ). The residue at position 236 (K236) is an N6-(pyridoxal phosphate)lysine. A N(2)-acetyl-L-ornithine-binding site is contributed by S264. A pyridoxal 5'-phosphate-binding site is contributed by T265.

This sequence belongs to the class-III pyridoxal-phosphate-dependent aminotransferase family. ArgD subfamily. As to quaternary structure, homodimer. Pyridoxal 5'-phosphate serves as cofactor.

The protein resides in the cytoplasm. It catalyses the reaction N(2)-acetyl-L-ornithine + 2-oxoglutarate = N-acetyl-L-glutamate 5-semialdehyde + L-glutamate. Its pathway is amino-acid biosynthesis; L-arginine biosynthesis; N(2)-acetyl-L-ornithine from L-glutamate: step 4/4. The chain is Acetylornithine aminotransferase from Halalkalibacterium halodurans (strain ATCC BAA-125 / DSM 18197 / FERM 7344 / JCM 9153 / C-125) (Bacillus halodurans).